The chain runs to 116 residues: Large ribosomal subunit protein bL20 (116 aa).

Belongs to the bacterial ribosomal protein bL20 family.

In terms of biological role, binds directly to 23S ribosomal RNA and is necessary for the in vitro assembly process of the 50S ribosomal subunit. It is not involved in the protein synthesizing functions of that subunit. In Desulforapulum autotrophicum (strain ATCC 43914 / DSM 3382 / VKM B-1955 / HRM2) (Desulfobacterium autotrophicum), this protein is Large ribosomal subunit protein bL20.